The primary structure comprises 497 residues: Probable cytosol aminopeptidase (497 aa).

The Mn(2+) site is built by K262 and D267. Residue K274 is part of the active site. Residues D285, D344, and E346 each contribute to the Mn(2+) site. R348 is an active-site residue.

It belongs to the peptidase M17 family. It depends on Mn(2+) as a cofactor.

It is found in the cytoplasm. It carries out the reaction Release of an N-terminal amino acid, Xaa-|-Yaa-, in which Xaa is preferably Leu, but may be other amino acids including Pro although not Arg or Lys, and Yaa may be Pro. Amino acid amides and methyl esters are also readily hydrolyzed, but rates on arylamides are exceedingly low.. The enzyme catalyses Release of an N-terminal amino acid, preferentially leucine, but not glutamic or aspartic acids.. Functionally, presumably involved in the processing and regular turnover of intracellular proteins. Catalyzes the removal of unsubstituted N-terminal amino acids from various peptides. The protein is Probable cytosol aminopeptidase of Rhizobium etli (strain ATCC 51251 / DSM 11541 / JCM 21823 / NBRC 15573 / CFN 42).